The chain runs to 506 residues: Acetaldehyde dehydrogenase (506 aa).

Active-site residues include Glu262 and Cys301.

The protein belongs to the aldehyde dehydrogenase family.

The enzyme catalyses acetaldehyde + NAD(+) + H2O = acetate + NADH + 2 H(+). It participates in alcohol metabolism; ethanol degradation; acetate from ethanol: step 2/2. Its function is as follows. Catalyzes the NAD(+)-dependent oxidation of acetaldehyde to acetate. Is likely a component of the ethanol oxidation system that allows P.aeruginosa to grow on ethanol as the sole carbon and energy source. The polypeptide is Acetaldehyde dehydrogenase (Pseudomonas aeruginosa).